Consider the following 113-residue polypeptide: Retrotransposon Gag-like protein 8A (113 aa).

The protein belongs to the FAM127 family.

The chain is Retrotransposon Gag-like protein 8A from Homo sapiens (Human).